The following is a 269-amino-acid chain: MLKKSDNKMTDQAYWCVVSGSDIWVNDDQFPFGSAEELGLSVEHAICIGQHQGRKVYWLNDCDVEIELSMVSLRDLLHWPESSFLIASKAIQYGHMTQSMRFCPQCGGRNHLNHNQVAMQCGDCRTLHYPRIFPCIIVAVRNDNKILLAQHPRHKTGMYTVIAGFLEVGETLEQCVAREVKEETGIDVSNIRYFGSQPWAFPSSMMMAFLADYAGGTLKPDYSELSDAQWFDVTSLPDVAPVGTIARQLIENTVDDIRKASVAEQELEH.

Arginine 74 contacts substrate. The Zn(2+) site is built by cysteine 103, cysteine 106, cysteine 121, and cysteine 124. Tyrosine 129 is a binding site for substrate. The region spanning 130 to 253 (PRIFPCIIVA…TIARQLIENT (124 aa)) is the Nudix hydrolase domain. Positions 163, 179, and 183 each coordinate a divalent metal cation. Residues 164 to 185 (GFLEVGETLEQCVAREVKEETG) carry the Nudix box motif. 197 to 204 (QPWAFPSS) contributes to the substrate binding site. Residue glutamate 224 coordinates a divalent metal cation. Residue alanine 246 coordinates substrate.

It belongs to the Nudix hydrolase family. NudC subfamily. In terms of assembly, homodimer. Mg(2+) serves as cofactor. Requires Mn(2+) as cofactor. Zn(2+) is required as a cofactor.

The catalysed reaction is a 5'-end NAD(+)-phospho-ribonucleoside in mRNA + H2O = a 5'-end phospho-adenosine-phospho-ribonucleoside in mRNA + beta-nicotinamide D-ribonucleotide + 2 H(+). It carries out the reaction NAD(+) + H2O = beta-nicotinamide D-ribonucleotide + AMP + 2 H(+). The enzyme catalyses NADH + H2O = reduced beta-nicotinamide D-ribonucleotide + AMP + 2 H(+). Its function is as follows. mRNA decapping enzyme that specifically removes the nicotinamide adenine dinucleotide (NAD) cap from a subset of mRNAs by hydrolyzing the diphosphate linkage to produce nicotinamide mononucleotide (NMN) and 5' monophosphate mRNA. The NAD-cap is present at the 5'-end of some mRNAs and stabilizes RNA against 5'-processing. Has preference for mRNAs with a 5'-end purine. Catalyzes the hydrolysis of a broad range of dinucleotide pyrophosphates. This chain is NAD-capped RNA hydrolase NudC, found in Vibrio atlanticus (strain LGP32) (Vibrio splendidus (strain Mel32)).